Consider the following 185-residue polypeptide: Putative manganese efflux pump MntP (185 aa).

Helical transmembrane passes span 3-23 (IFTL…VSLA), 40-60 (LLFV…VSVI), 64-84 (FDAY…LRMI), 102-122 (TFSR…AVGI), 124-144 (LSLA…FVLI), and 165-185 (EIFG…DAMM).

It belongs to the MntP (TC 9.B.29) family.

Its subcellular location is the cell inner membrane. Its function is as follows. Probably functions as a manganese efflux pump. The sequence is that of Putative manganese efflux pump MntP from Elusimicrobium minutum (strain Pei191).